The following is a 335-amino-acid chain: uncharacterized protein (335 aa).

Disordered regions lie at residues 153-174, 218-239, and 254-295; these read LNDKEDEEKLDQTTESEESDRI, HTSVRRSMSSVSSSASSTQEEV, and RCKV…PVTS. Positions 156–170 are enriched in acidic residues; sequence KEDEEKLDQTTESEE. Low complexity-rich tracts occupy residues 222 to 234 and 275 to 295; these read RRSMSSVSSSASS and THTSVSSLSVHSVSPTPPVTS.

This is an uncharacterized protein from Caenorhabditis elegans.